The chain runs to 463 residues: MRLLVSCVDSGSIKEVLCNIGTDTSVQSALQPFHVAPHLAEGLKAYVDRMWVISEDEAILARNSGVVELVKISKHLKENEALQVDPKGESKNEKSLSDDLPKFDISEFEITSSVSDLFDDAKLESLSSKSVKRTKLVDGFVTLCPIKKDSSNNTFVAATKSGLLHIIKKGEDKKLIKLASLGLKAPVEFLQLYDLEDTDTDKYIFAYGGEENLIKLVEIDSSFQSLKQIWEAKNVKNDRLDMRVPVWPMALRFLEPSPGKTEKGKLNYQFAAITRWSHLTKYSTQHGRKPFAQIDLLPNREPLSQMEVFDAKGENVVSSLGNFQSETFNELNVITTDYKKNVFKFDGNGRMLGKVGRDDITGSSTYIHVHDGKYLLQGGLDRYVRIFDIKTNKMLVKVYVGSRINFIVMLDDVEIEMPLSPSAKAAKGKQKRKVTELEEDADELWNKLEGKVAASKASKKSKI.

The protein belongs to the NSA1 family. Component of the pre-66S ribosomal particle. Interacts with NOP7, RRP1 and RRP5.

It is found in the nucleus. The protein resides in the nucleolus. Involved in the biogenesis of the 60S ribosomal subunit. In Saccharomyces cerevisiae (strain ATCC 204508 / S288c) (Baker's yeast), this protein is Ribosome biogenesis protein NSA1 (NSA1).